Here is a 126-residue protein sequence, read N- to C-terminus: MHLSLLKAKIHRATVTHSELNYEGSIAIDGLLLEATGIREFEQVHIWDVTNGARFSTYAIRAEEGSGIISLNGGAARHVQVGDLIIVAAFAGMSEDEAKTFKPNLVYVDAHNAISHTNHSIPTQAA.

Residue serine 25 is the Schiff-base intermediate with substrate; via pyruvic acid of the active site. Serine 25 carries the post-translational modification Pyruvic acid (Ser). Threonine 57 contributes to the substrate binding site. Residue tyrosine 58 is the Proton donor of the active site. Residue 73–75 (GGA) coordinates substrate.

It belongs to the PanD family. In terms of assembly, heterooctamer of four alpha and four beta subunits. The cofactor is pyruvate. Is synthesized initially as an inactive proenzyme, which is activated by self-cleavage at a specific serine bond to produce a beta-subunit with a hydroxyl group at its C-terminus and an alpha-subunit with a pyruvoyl group at its N-terminus.

The protein resides in the cytoplasm. The catalysed reaction is L-aspartate + H(+) = beta-alanine + CO2. Its pathway is cofactor biosynthesis; (R)-pantothenate biosynthesis; beta-alanine from L-aspartate: step 1/1. In terms of biological role, catalyzes the pyruvoyl-dependent decarboxylation of aspartate to produce beta-alanine. The protein is Aspartate 1-decarboxylase of Xanthomonas campestris pv. campestris (strain B100).